A 448-amino-acid polypeptide reads, in one-letter code: Packaging protein 1 (448 aa).

Residues 1-76 (METKGRRSAA…SQPAKRGGLL (76 aa)) form a disordered region. A compositionally biased stretch (basic residues) spans 22 to 31 (PRKRPTRRAP). Polar residues predominate over residues 56–67 (RPSSDSLLQEPS). An ATP-binding site is contributed by 171 to 178 (GPTGCGKS). Residues 440–448 (RAYRARKIK) form a DNA-binding region.

This sequence belongs to the adenoviridae packaging protein 1 family. As to quaternary structure, homodimer. Part of a genome packaging complex composed of packaging proteins 1, 2 and 3; this complex specifically binds to the packaging sequence on the left end of viral genomic DNA and performs packaging of the viral genome. Interacts with protein 33K.

The protein localises to the virion. Its subcellular location is the host nucleus. It is found in the host nucleoplasm. It localises to the host nucleolus. In terms of biological role, component of the packaging machinery which encapsidates the viral DNA into preformed capsids and transcriptional activator of the viral major late promoter (MLP). Binds, along with packaging proteins 2 and 3, to the specific packaging sequence on the left end of viral genomic DNA and displays ATPase activity thereby providing the power stroke of the packaging machinery. The activity of packaging protein IVa2 is stimulated by protein 33K which acts as a terminase. May be the protein that pumps DNA into the capsid powered by ATP hydrolysis. Specifically binds to the 5'-CG-3' nucleotides of the repeats making up the packaging sequence. Component of the DEF-A and DEF-B transcription factors that bind downstream elements of the major late promoter (MLP), and stimulate transcription from the MLP after initiation of viral DNA replication. DEF-A is a heterodimer packaging proteins 1 and 2 and DEF-B is a homodimer of packaging protein 1. The sequence is that of Packaging protein 1 from Human adenovirus B serotype 7 (HAdV-7).